The following is a 640-amino-acid chain: 1-deoxy-D-xylulose-5-phosphate synthase (640 aa).

Residues His79 and Ala120 to Ser122 each bind thiamine diphosphate. Residue Asp151 participates in Mg(2+) binding. Residues Gly152–Ala153, Asn180, Tyr289, and Glu371 each bind thiamine diphosphate. Asn180 contacts Mg(2+).

This sequence belongs to the transketolase family. DXPS subfamily. In terms of assembly, homodimer. Requires Mg(2+) as cofactor. It depends on thiamine diphosphate as a cofactor.

The catalysed reaction is D-glyceraldehyde 3-phosphate + pyruvate + H(+) = 1-deoxy-D-xylulose 5-phosphate + CO2. The protein operates within metabolic intermediate biosynthesis; 1-deoxy-D-xylulose 5-phosphate biosynthesis; 1-deoxy-D-xylulose 5-phosphate from D-glyceraldehyde 3-phosphate and pyruvate: step 1/1. Functionally, catalyzes the acyloin condensation reaction between C atoms 2 and 3 of pyruvate and glyceraldehyde 3-phosphate to yield 1-deoxy-D-xylulose-5-phosphate (DXP). In Novosphingobium aromaticivorans (strain ATCC 700278 / DSM 12444 / CCUG 56034 / CIP 105152 / NBRC 16084 / F199), this protein is 1-deoxy-D-xylulose-5-phosphate synthase.